A 160-amino-acid polypeptide reads, in one-letter code: Cytochrome b6-f complex subunit 4 (160 aa).

3 helical membrane-spanning segments follow: residues 36–56, 95–115, and 128–148; these read LLYIFPVVILGTFACLVGLAV, LLGIVLQTLVPLGLMLIPFIE, and IAMAFFLFGTMITIYLGIGAC.

It belongs to the cytochrome b family. PetD subfamily. As to quaternary structure, the 4 large subunits of the cytochrome b6-f complex are cytochrome b6, subunit IV (17 kDa polypeptide, PetD), cytochrome f and the Rieske protein, while the 4 small subunits are PetG, PetL, PetM and PetN. The complex functions as a dimer.

The protein resides in the cellular thylakoid membrane. Functionally, component of the cytochrome b6-f complex, which mediates electron transfer between photosystem II (PSII) and photosystem I (PSI), cyclic electron flow around PSI, and state transitions. This Prochlorococcus marinus (strain MIT 9303) protein is Cytochrome b6-f complex subunit 4.